Reading from the N-terminus, the 65-residue chain is uncharacterized protein (65 aa).

This is an uncharacterized protein from Archaeoglobus fulgidus (strain ATCC 49558 / DSM 4304 / JCM 9628 / NBRC 100126 / VC-16).